Reading from the N-terminus, the 373-residue chain is Beta sliding clamp homolog GriR (373 aa).

It belongs to the beta sliding clamp family. As to quaternary structure, forms a ring-shaped head-to-tail homodimer around DNA which binds and tethers DNA polymerases and other proteins to the DNA. The DNA replisome complex has a single clamp-loading complex (3 tau and 1 each of delta, delta', psi and chi subunits) which binds 3 Pol III cores (1 core on the leading strand and 2 on the lagging strand) each with a beta sliding clamp dimer. Additional proteins in the replisome are other copies of gamma, psi and chi, Ssb, DNA helicase and RNA primase.

It localises to the cytoplasm. Its function is as follows. A homolog of the beta sliding clamp protein encoded within the biosynthetic cluster for griselimycin synthesis. Upon expression in S.coelicolor A3(2), which is susceptible to this antibiotic, confers resistance to griselimycin. The beta sliding clamp confers DNA tethering and processivity to DNA polymerases and other proteins. Acts as a clamp, forming a ring around DNA (a reaction catalyzed by the clamp-loading complex) which diffuses in an ATP-independent manner freely and bidirectionally along dsDNA. Initially characterized for its ability to contact the catalytic subunit of DNA polymerase III (Pol III), a complex, multichain enzyme responsible for most of the replicative synthesis in bacteria; Pol III exhibits 3'-5' exonuclease proofreading activity. The beta chain is required for initiation of replication as well as for processivity of DNA replication. This chain is Beta sliding clamp homolog GriR, found in Streptomyces muensis.